The chain runs to 179 residues: Large ribosomal subunit protein uL5 (179 aa).

This sequence belongs to the universal ribosomal protein uL5 family. Part of the 50S ribosomal subunit; part of the 5S rRNA/L5/L18/L25 subcomplex. Contacts the 5S rRNA and the P site tRNA. Forms a bridge to the 30S subunit in the 70S ribosome.

Its function is as follows. This is one of the proteins that bind and probably mediate the attachment of the 5S RNA into the large ribosomal subunit, where it forms part of the central protuberance. In the 70S ribosome it contacts protein S13 of the 30S subunit (bridge B1b), connecting the 2 subunits; this bridge is implicated in subunit movement. Contacts the P site tRNA; the 5S rRNA and some of its associated proteins might help stabilize positioning of ribosome-bound tRNAs. The sequence is that of Large ribosomal subunit protein uL5 from Rickettsia africae (strain ESF-5).